Here is a 511-residue protein sequence, read N- to C-terminus: V-type proton ATPase subunit B, brain isoform (511 aa).

Position 400 (Arg-400) interacts with ATP.

The protein belongs to the ATPase alpha/beta chains family. V-ATPase is a heteromultimeric enzyme made up of two complexes: the ATP-hydrolytic V1 complex and the proton translocation V0 complex. The V1 complex consists of three catalytic AB heterodimers that form a heterohexamer, three peripheral stalks each consisting of EG heterodimers, one central rotor including subunits D and F, and the regulatory subunits C and H. The proton translocation complex V0 consists of the proton transport subunit a, a ring of proteolipid subunits c9c'', rotary subunit d, subunits e and f, and the accessory subunits ATP6AP1/Ac45 and ATP6AP2/PRR. Kidney; found in early distal nephron, encompassing thick ascending limbs and distal convoluted tubules and in the alpha-intercalated cells of the cortical collecting ducts (at protein level). Expressed in epididymal clear cells (at protein level). Mainly expressed in the organ of Corti and spiral ganglion neurons, in both the early postnatal cochlea (P2) and the adult cochlea (P30).

It localises to the apical cell membrane. It is found in the melanosome. The protein resides in the cytoplasm. The protein localises to the cytoplasmic vesicle. Its subcellular location is the secretory vesicle. It localises to the synaptic vesicle membrane. It is found in the clathrin-coated vesicle membrane. Its function is as follows. Non-catalytic subunit of the V1 complex of vacuolar(H+)-ATPase (V-ATPase), a multisubunit enzyme composed of a peripheral complex (V1) that hydrolyzes ATP and a membrane integral complex (V0) that translocates protons. V-ATPase is responsible for acidifying and maintaining the pH of intracellular compartments and in some cell types, is targeted to the plasma membrane, where it is responsible for acidifying the extracellular environment. In renal intercalated cells, can partially compensate the lack of ATP6V1B1 and mediate secretion of protons (H+) into the urine under base-line conditions but not in conditions of acid load. This chain is V-type proton ATPase subunit B, brain isoform (Atp6v1b2), found in Mus musculus (Mouse).